The chain runs to 443 residues: ATP-dependent protease ATPase subunit HslU (443 aa).

Residues Ile18 and 60-65 (GVGKTE) contribute to the ATP site. Residues 137–156 (PPPRDAWGQNEQSEDTSNTR) are disordered. Over residues 145–156 (QNEQSEDTSNTR) the composition is skewed to polar residues. The ATP site is built by Asp256, Glu321, and Arg393.

The protein belongs to the ClpX chaperone family. HslU subfamily. In terms of assembly, a double ring-shaped homohexamer of HslV is capped on each side by a ring-shaped HslU homohexamer. The assembly of the HslU/HslV complex is dependent on binding of ATP.

It is found in the cytoplasm. Its function is as follows. ATPase subunit of a proteasome-like degradation complex; this subunit has chaperone activity. The binding of ATP and its subsequent hydrolysis by HslU are essential for unfolding of protein substrates subsequently hydrolyzed by HslV. HslU recognizes the N-terminal part of its protein substrates and unfolds these before they are guided to HslV for hydrolysis. The protein is ATP-dependent protease ATPase subunit HslU of Vibrio vulnificus (strain YJ016).